The primary structure comprises 711 residues: Polyribonucleotide nucleotidyltransferase (711 aa).

Positions 486 and 492 each coordinate Mg(2+). Positions Pro-553–Ile-612 constitute a KH domain. The 69-residue stretch at Gly-622 to Lys-690 folds into the S1 motif domain. The disordered stretch occupies residues Glu-691 to Glu-711. Residues Ala-699–Glu-711 show a composition bias toward low complexity.

This sequence belongs to the polyribonucleotide nucleotidyltransferase family. In terms of assembly, component of the RNA degradosome, which is a multiprotein complex involved in RNA processing and mRNA degradation. The cofactor is Mg(2+).

It localises to the cytoplasm. It carries out the reaction RNA(n+1) + phosphate = RNA(n) + a ribonucleoside 5'-diphosphate. Its function is as follows. Involved in mRNA degradation. Catalyzes the phosphorolysis of single-stranded polyribonucleotides processively in the 3'- to 5'-direction. The sequence is that of Polyribonucleotide nucleotidyltransferase from Klebsiella pneumoniae (strain 342).